The following is a 219-amino-acid chain: ATP-dependent dethiobiotin synthetase BioD (219 aa).

Position 12-17 (12-17) interacts with ATP; that stretch reads EVGKTY. Thr-16 lines the Mg(2+) pocket. The active site involves Lys-37. Residue Ser-41 coordinates substrate. ATP is bound by residues Asp-52, 114–117, and 174–175; these read EGAG and NC. Asp-52 and Glu-114 together coordinate Mg(2+).

The protein belongs to the dethiobiotin synthetase family. In terms of assembly, homodimer. Requires Mg(2+) as cofactor.

The protein resides in the cytoplasm. The catalysed reaction is (7R,8S)-7,8-diammoniononanoate + CO2 + ATP = (4R,5S)-dethiobiotin + ADP + phosphate + 3 H(+). It functions in the pathway cofactor biosynthesis; biotin biosynthesis; biotin from 7,8-diaminononanoate: step 1/2. Its function is as follows. Catalyzes a mechanistically unusual reaction, the ATP-dependent insertion of CO2 between the N7 and N8 nitrogen atoms of 7,8-diaminopelargonic acid (DAPA, also called 7,8-diammoniononanoate) to form a ureido ring. In Francisella tularensis subsp. holarctica (strain FTNF002-00 / FTA), this protein is ATP-dependent dethiobiotin synthetase BioD.